We begin with the raw amino-acid sequence, 263 residues long: Tropinone reductase homolog At2g29300 (263 aa).

Residue 13–37 (LVTGAASGIGYAIVEELAGFGARIH) participates in NADP(+) binding. Position 146 (Ser-146) interacts with substrate. The active-site Proton acceptor is the Tyr-160.

The protein belongs to the short-chain dehydrogenases/reductases (SDR) family. SDR65C subfamily.

The protein is Tropinone reductase homolog At2g29300 of Arabidopsis thaliana (Mouse-ear cress).